Here is a 238-residue protein sequence, read N- to C-terminus: Keratin-associated protein 5-3 (238 aa).

11 consecutive repeat copies span residues 35 to 38, 41 to 44, 47 to 50, 91 to 94, 150 to 153, 160 to 163, 170 to 173, 189 to 192, 199 to 202, 218 to 221, and 228 to 231. Residues 35 to 231 are 11 X 4 AA repeats of C-C-X-P; the sequence is CCVPVCCCKP…CSSQSSCCVP (197 aa).

It belongs to the KRTAP type 5 family. As to quaternary structure, interacts with hair keratins. Restricted to hair root, not detected in any other tissues.

Its function is as follows. In the hair cortex, hair keratin intermediate filaments are embedded in an interfilamentous matrix, consisting of hair keratin-associated protein (KRTAP), which are essential for the formation of a rigid and resistant hair shaft through their extensive disulfide bond cross-linking with abundant cysteine residues of hair keratins. The matrix proteins include the high-sulfur and high-glycine-tyrosine keratins. The chain is Keratin-associated protein 5-3 (KRTAP5-3) from Homo sapiens (Human).